We begin with the raw amino-acid sequence, 443 residues long: Glutamate-rich protein 1 (443 aa).

The residue at position 12 (Lys-12) is an N6-acetyllysine. The interval 15 to 333 (QRLFPPVPSG…DASEEDDTIT (319 aa)) is disordered. Residues 42-54 (VTSEKVSQKHAEP) show a composition bias toward basic and acidic residues. The segment covering 87-97 (SCGSPENASSG) has biased composition (polar residues). 2 stretches are compositionally biased toward basic residues: residues 109-124 (PKRR…KKFK) and 159-176 (KNKK…RKKA). Residues 205–226 (ACEEDGVDTSEEDPTLAGEEDV) show a composition bias toward acidic residues. Residues Ser-238 and Ser-254 each carry the phosphoserine modification. The segment covering 250-266 (GADASEEDPTPAGEEDV) has biased composition (acidic residues). At Thr-277 the chain carries Phosphothreonine. Basic and acidic residues predominate over residues 281-296 (DLTRAGEEDGKDTREE). Over residues 297 to 332 (DGADASEEDPTWAGEEEGADSGEEDGADASEEDDTI) the composition is skewed to acidic residues.

The polypeptide is Glutamate-rich protein 1 (ERICH1) (Homo sapiens (Human)).